The primary structure comprises 84 residues: Sulfur carrier protein TusA (84 aa).

Cys-19 functions as the Cysteine persulfide intermediate in the catalytic mechanism.

The protein belongs to the sulfur carrier protein TusA family. In terms of assembly, interacts with IscS.

It localises to the cytoplasm. It participates in tRNA modification. Sulfur carrier protein involved in sulfur trafficking in the cell. Part of a sulfur-relay system required for 2-thiolation during synthesis of 2-thiouridine of the modified wobble base 5-methylaminomethyl-2-thiouridine (mnm(5)s(2)U) in tRNA. Interacts with IscS and stimulates its cysteine desulfurase activity. Accepts an activated sulfur from IscS, which is then transferred to TusD, and thus determines the direction of sulfur flow from IscS to 2-thiouridine formation. Also appears to be involved in sulfur transfer for the biosynthesis of molybdopterin. The polypeptide is Sulfur carrier protein TusA (Yersinia pseudotuberculosis serotype O:1b (strain IP 31758)).